The following is a 118-amino-acid chain: Large ribosomal subunit protein bL19 (118 aa).

The protein belongs to the bacterial ribosomal protein bL19 family.

In terms of biological role, this protein is located at the 30S-50S ribosomal subunit interface and may play a role in the structure and function of the aminoacyl-tRNA binding site. This chain is Large ribosomal subunit protein bL19, found in Saccharophagus degradans (strain 2-40 / ATCC 43961 / DSM 17024).